Here is a 530-residue protein sequence, read N- to C-terminus: Probable glycerol-3-phosphate acyltransferase 2 (530 aa).

Transmembrane regions (helical) follow at residues 70–90 (YFMV…LLVL), 93–113 (FISL…SFFG), and 275–295 (LVLF…LVFG). Positions 339–344 (HRTLLD) match the HXXXXD motif motif.

This sequence belongs to the GPAT/DAPAT family. As to expression, weakly or not expressed in roots, leaves, seedlings, developing siliques and flower buds.

It is found in the membrane. The enzyme catalyses sn-glycerol 3-phosphate + an acyl-CoA = a 1-acyl-sn-glycero-3-phosphate + CoA. The protein operates within phospholipid metabolism; CDP-diacylglycerol biosynthesis; CDP-diacylglycerol from sn-glycerol 3-phosphate: step 1/3. Its function is as follows. Esterifies acyl-group from acyl-ACP to the sn-1 position of glycerol-3-phosphate, an essential step in glycerolipid biosynthesis. The protein is Probable glycerol-3-phosphate acyltransferase 2 (GPAT2) of Arabidopsis thaliana (Mouse-ear cress).